A 180-amino-acid chain; its full sequence is Large ribosomal subunit protein eL18 (180 aa).

The segment at Phe-152–Ala-180 is disordered. Positions Lys-170–Ala-180 are enriched in basic and acidic residues.

It belongs to the eukaryotic ribosomal protein eL18 family.

It localises to the cytoplasm. This chain is Large ribosomal subunit protein eL18 (RPL18), found in Taenia asiatica (Asian tapeworm).